The sequence spans 136 residues: Organic hydroperoxide resistance protein OhrB (136 aa).

The protein belongs to the OsmC/Ohr family.

Involved in organic hydroperoxide resistance. This is Organic hydroperoxide resistance protein OhrB (ohrB) from Bacillus subtilis (strain 168).